The primary structure comprises 120 residues: NAD(P)H-quinone oxidoreductase subunit 3, chloroplastic (120 aa).

The next 3 helical transmembrane spans lie at Ile9 to Gly29, Met64 to Met84, and Val88 to Ser108.

Belongs to the complex I subunit 3 family. In terms of assembly, NDH is composed of at least 16 different subunits, 5 of which are encoded in the nucleus.

The protein localises to the plastid. It localises to the chloroplast thylakoid membrane. The catalysed reaction is a plastoquinone + NADH + (n+1) H(+)(in) = a plastoquinol + NAD(+) + n H(+)(out). It carries out the reaction a plastoquinone + NADPH + (n+1) H(+)(in) = a plastoquinol + NADP(+) + n H(+)(out). Functionally, NDH shuttles electrons from NAD(P)H:plastoquinone, via FMN and iron-sulfur (Fe-S) centers, to quinones in the photosynthetic chain and possibly in a chloroplast respiratory chain. The immediate electron acceptor for the enzyme in this species is believed to be plastoquinone. Couples the redox reaction to proton translocation, and thus conserves the redox energy in a proton gradient. This chain is NAD(P)H-quinone oxidoreductase subunit 3, chloroplastic, found in Liriodendron tulipifera (Tuliptree).